Here is a 59-residue protein sequence, read N- to C-terminus: Large ribosomal subunit protein uL30 (59 aa).

Belongs to the universal ribosomal protein uL30 family. As to quaternary structure, part of the 50S ribosomal subunit.

The polypeptide is Large ribosomal subunit protein uL30 (Enterococcus faecalis (strain ATCC 700802 / V583)).